The following is a 159-amino-acid chain: Ornithine decarboxylase antizyme (159 aa).

It belongs to the ODC antizyme family. Interacts with ODC1 and thereby sterically blocks ODC homodimerization.

Its function is as follows. Ornithine decarboxylase (ODC) antizyme protein that negatively regulates ODC activity and intracellular polyamine biosynthesis and uptake in response to increased intracellular polyamine levels. Binds to ODC monomers, inhibiting the assembly of the functional ODC homodimer, and targets the monomers for ubiquitin-independent proteolytic destruction by the 26S proteasome. In Caenorhabditis elegans, this protein is Ornithine decarboxylase antizyme.